The sequence spans 813 residues: Leucine--tRNA ligase (813 aa).

A 'HIGH' region motif is present at residues 41-51 (PYPSGTLHMGH). Residues 575 to 579 (KMSKS) carry the 'KMSKS' region motif. Lys-578 provides a ligand contact to ATP.

This sequence belongs to the class-I aminoacyl-tRNA synthetase family.

The protein localises to the cytoplasm. It carries out the reaction tRNA(Leu) + L-leucine + ATP = L-leucyl-tRNA(Leu) + AMP + diphosphate. The polypeptide is Leucine--tRNA ligase (Francisella tularensis subsp. tularensis (strain WY96-3418)).